Consider the following 404-residue polypeptide: uncharacterized protein (404 aa).

12 consecutive transmembrane segments (helical) span residues 3–23 (IIAKIPAWMLLCLFTLSPITE), 43–63 (TTQITSSLYYLGFALGILTLG), 73–93 (PVVLFGLCIYAISSIISIFAP), 95–115 (IETLMLARFVQAFGVSVGSVI), 135–155 (SLSPWLLFIPSLGSSIGGYII), 162–182 (YTFVFFSLTGTVLLTLYCKIL), 216–236 (IIGAFNGIYYGFYIEAPFIFI), 248–268 (KLAFLLSFAGIFGGFLGGYLI), 280–300 (ILGLVFSVIGCSLLAIDALIL), 309–329 (IAVIMMFAPMMLHMVGHNLLI), 346–366 (TAGSVFGAIYYVLIAAVTFLV), and 377–397 (FALLFLVLSVSSAAAFYYILI).

The protein belongs to the major facilitator superfamily. Bcr/CmlA family.

The protein resides in the cell inner membrane. This is an uncharacterized protein from Rickettsia bellii (strain RML369-C).